The chain runs to 88 residues: Protein GOLVEN 10 (88 aa).

A signal peptide spans 1–22 (MSSIHVASMILLLFLFLHHSDS). The propeptide occupies 23-75 (RHLDNVHITASRFSLVKDQNVVSSSTSKEPVKVSRFVPGPLKHHHRRPPLLFA). The tract at residues 44-88 (VSSSTSKEPVKVSRFVPGPLKHHHRRPPLLFADYPKPSTRPPRHN) is disordered. Tyrosine 77 carries the post-translational modification Sulfotyrosine. Proline 85 carries the hydroxyproline modification.

Belongs to the RGF family. As to quaternary structure, binds to LRR receptor-like serine/threonine-protein kinases RGI1, RGI2 and RGI3 to trigger their dimerization with SERK proteins and subsequent signaling. Expressed in roots, shoots, leaves and flowers.

Its subcellular location is the secreted. The protein localises to the endoplasmic reticulum. In terms of biological role, signaling peptide (root growth factor) that maintains the postembryonic root stem cell niche. Regulates the pattern of root growth and lateral root development by modulating the length and the number of cortical cells in the root apical meristem (RAM), and the anticlinal asymmetric cell divisions in lateral root initiation cells. This is Protein GOLVEN 10 from Arabidopsis thaliana (Mouse-ear cress).